Reading from the N-terminus, the 437-residue chain is Chaperone SurA (437 aa).

A signal peptide spans 1-27 (MHNHVFKTIARHGLIALFFFFSISAMA). 2 PpiC domains span residues 179-280 (QDEF…KLLN) and 290-388 (VDQT…QVLE).

The protein localises to the periplasm. The catalysed reaction is [protein]-peptidylproline (omega=180) = [protein]-peptidylproline (omega=0). Chaperone involved in the correct folding and assembly of outer membrane proteins. Recognizes specific patterns of aromatic residues and the orientation of their side chains, which are found more frequently in integral outer membrane proteins. May act in both early periplasmic and late outer membrane-associated steps of protein maturation. The sequence is that of Chaperone SurA from Methylobacillus flagellatus (strain ATCC 51484 / DSM 6875 / VKM B-1610 / KT).